We begin with the raw amino-acid sequence, 306 residues long: Meiotically up-regulated gene 73 protein (306 aa).

The next 7 membrane-spanning stretches (helical) occupy residues Tyr-28–Phe-48, Phe-59–Gly-79, Tyr-103–Val-123, Ile-125–Ala-145, Trp-154–Leu-174, Phe-190–Leu-210, and Ile-224–Met-244.

The protein belongs to the archaeal/bacterial/fungal opsin family.

The protein resides in the membrane. Functionally, has a role in meiosis. The polypeptide is Meiotically up-regulated gene 73 protein (mug73) (Schizosaccharomyces pombe (strain 972 / ATCC 24843) (Fission yeast)).